A 235-amino-acid polypeptide reads, in one-letter code: MGRAFEYRRASKEARWDKMSKLFPKLAKAIQVAAKEGGIDPDMNPKLRSAIATAKANNMPKDNIDAAIKRASGKDSADIKNIHYEGKAAHGALVIVECMSDNPTRTVANVKAIFSKNGGEVLQNGSLGFMFTRKAVFHLEKFAGDLEELELDLIDAGFEELEQNEEELVISGDYTAFGELSSAIEAKGLVLKKAGLEYIPNNPVSFSKEQLSDIEKLLDKLEDDDDVQAVYTNID.

It belongs to the TACO1 family.

The protein localises to the cytoplasm. The polypeptide is Probable transcriptional regulatory protein JJD26997_0557 (Campylobacter jejuni subsp. doylei (strain ATCC BAA-1458 / RM4099 / 269.97)).